A 671-amino-acid polypeptide reads, in one-letter code: DNA ligase (671 aa).

NAD(+)-binding positions include 32–36, 81–82, and Glu113; these read DAEYD and SL. The N6-AMP-lysine intermediate role is filled by Lys115. NAD(+) contacts are provided by Arg136, Glu173, Lys290, and Lys314. Zn(2+) is bound by residues Cys408, Cys411, Cys426, and Cys432. Positions 593–671 constitute a BRCT domain; it reads EIDSPFAGKT…EAEMIRLLGA (79 aa).

This sequence belongs to the NAD-dependent DNA ligase family. LigA subfamily. Mg(2+) is required as a cofactor. Mn(2+) serves as cofactor.

The catalysed reaction is NAD(+) + (deoxyribonucleotide)n-3'-hydroxyl + 5'-phospho-(deoxyribonucleotide)m = (deoxyribonucleotide)n+m + AMP + beta-nicotinamide D-nucleotide.. Functionally, DNA ligase that catalyzes the formation of phosphodiester linkages between 5'-phosphoryl and 3'-hydroxyl groups in double-stranded DNA using NAD as a coenzyme and as the energy source for the reaction. It is essential for DNA replication and repair of damaged DNA. The chain is DNA ligase from Salmonella newport (strain SL254).